The sequence spans 164 residues: Small ribosomal subunit protein uS3m (164 aa).

The transit peptide at 1–23 directs the protein to the mitochondrion; sequence MLRSIQHVEALSSRQISTTSMLL.

Belongs to the universal ribosomal protein uS3 family. As to quaternary structure, component of the mitochondrial ribosome small subunit (28S) which comprises a 12S rRNA and about 30 distinct proteins.

Its subcellular location is the mitochondrion. The polypeptide is Small ribosomal subunit protein uS3m (mrps-24) (Caenorhabditis elegans).